Consider the following 222-residue polypeptide: Holliday junction branch migration complex subunit RuvA (222 aa).

The segment at 1–67 (MISWLNGLKI…EDGSQLIGFL (67 aa)) is domain I. The segment at 68-146 (NKLERDLFRK…DLIGSSLKKT (79 aa)) is domain II. Residues 147-155 (NNHLELEYE) are flexible linker. A domain III region spans residues 155-222 (ETNVADEVRS…TLIRINTESG (68 aa)).

The protein belongs to the RuvA family. Homotetramer. Forms an RuvA(8)-RuvB(12)-Holliday junction (HJ) complex. HJ DNA is sandwiched between 2 RuvA tetramers; dsDNA enters through RuvA and exits via RuvB. An RuvB hexamer assembles on each DNA strand where it exits the tetramer. Each RuvB hexamer is contacted by two RuvA subunits (via domain III) on 2 adjacent RuvB subunits; this complex drives branch migration. In the full resolvosome a probable DNA-RuvA(4)-RuvB(12)-RuvC(2) complex forms which resolves the HJ.

The protein resides in the cytoplasm. Its function is as follows. The RuvA-RuvB-RuvC complex processes Holliday junction (HJ) DNA during genetic recombination and DNA repair, while the RuvA-RuvB complex plays an important role in the rescue of blocked DNA replication forks via replication fork reversal (RFR). RuvA specifically binds to HJ cruciform DNA, conferring on it an open structure. The RuvB hexamer acts as an ATP-dependent pump, pulling dsDNA into and through the RuvAB complex. HJ branch migration allows RuvC to scan DNA until it finds its consensus sequence, where it cleaves and resolves the cruciform DNA. The polypeptide is Holliday junction branch migration complex subunit RuvA (Prochlorococcus marinus (strain SARG / CCMP1375 / SS120)).